The primary structure comprises 39 residues: MDWRVLIVLTPLLIAGGWAVFNIGAAALRQAQQFLSKQS.

The helical transmembrane segment at 5–23 (VLIVLTPLLIAGGWAVFNI) threads the bilayer.

Belongs to the PsbY family. In terms of assembly, PSII is composed of 1 copy each of membrane proteins PsbA, PsbB, PsbC, PsbD, PsbE, PsbF, PsbH, PsbI, PsbJ, PsbK, PsbL, PsbM, PsbT, PsbX, PsbY, PsbZ, Psb30/Ycf12, peripheral proteins PsbO, CyanoQ (PsbQ), PsbU, PsbV and a large number of cofactors. It forms dimeric complexes.

The protein localises to the cellular thylakoid membrane. Functionally, loosely associated component of the core of photosystem II (PSII), it is not always seen in crystals. PSII is a light-driven water plastoquinone oxidoreductase, using light energy to abstract electrons from H(2)O, generating a proton gradient subsequently used for ATP formation. The polypeptide is Photosystem II reaction center protein Y (Microcystis aeruginosa (strain NIES-843 / IAM M-2473)).